The chain runs to 338 residues: L-lysine 2,3-aminomutase (338 aa).

A Radical SAM core domain is found at 107-330 (HKYRNRLLFM…PKLAREIAGE (224 aa)). Residues Cys-121, Cys-125, and Cys-128 each coordinate [4Fe-4S] cluster. Lys-333 carries the N6-(pyridoxal phosphate)lysine modification.

Belongs to the radical SAM superfamily. KamA family. The cofactor is [4Fe-4S] cluster. Pyridoxal 5'-phosphate serves as cofactor.

It catalyses the reaction L-lysine = D-beta-lysine. With EpmA is involved in the beta-lysylation step of the post-translational modification of translation elongation factor P (EF-P) on 'Lys-34'. EpmB appears to act before EpmA. Displays lysine 2,3-aminomutase activity, producing (R)-beta-lysine from (S)-alpha-lysine (L-lysine). The polypeptide is L-lysine 2,3-aminomutase (epmB) (Haemophilus influenzae (strain ATCC 51907 / DSM 11121 / KW20 / Rd)).